The sequence spans 352 residues: 7,8-didemethyl-8-hydroxy-5-deazariboflavin synthase (352 aa).

The Radical SAM core domain occupies 35 to 275; that stretch reads ITFSKNAFIP…EGISIQVPPN (241 aa). Residues cysteine 49, cysteine 53, and cysteine 56 each contribute to the [4Fe-4S] cluster site.

It belongs to the radical SAM superfamily. CofG family. In terms of assembly, consists of two subunits, CofG and CofH. [4Fe-4S] cluster serves as cofactor.

The catalysed reaction is 5-amino-5-(4-hydroxybenzyl)-6-(D-ribitylimino)-5,6-dihydrouracil + S-adenosyl-L-methionine = 7,8-didemethyl-8-hydroxy-5-deazariboflavin + 5'-deoxyadenosine + L-methionine + NH4(+) + H(+). It participates in cofactor biosynthesis; coenzyme F0 biosynthesis. Its function is as follows. Catalyzes the radical-mediated synthesis of 7,8-didemethyl-8-hydroxy-5-deazariboflavin from 5-amino-5-(4-hydroxybenzyl)-6-(D-ribitylimino)-5,6-dihydrouracil. The sequence is that of 7,8-didemethyl-8-hydroxy-5-deazariboflavin synthase from Methanococcus maripaludis (strain C5 / ATCC BAA-1333).